The primary structure comprises 526 residues: Tyrosine-protein kinase transforming protein Src (526 aa).

The interval 1–57 (MGSSKSKPKDPSQRRRSLEPPDSTHHGGFPASQTPNKTAAPDTHRTPSRSFGTVATE) is disordered. Gly2 carries the N-myristoyl glycine; by host lipid modification. Over residues 7-25 (KPKDPSQRRRSLEPPDSTH) the composition is skewed to basic and acidic residues. One can recognise an SH3 domain in the interval 81 to 142 (GGVTTFVALY…PSNYVAPSDS (62 aa)). Positions 148 to 245 (WYFGKITRRE…GLCHRLTNVC (98 aa)) constitute an SH2 domain. One can recognise a Protein kinase domain in the interval 267 to 517 (LRLEVKLGQG…TFEYLQAQLL (251 aa)). Residues 273–281 (LGQGCFGEV) and Lys295 contribute to the ATP site. Asp386 functions as the Proton acceptor in the catalytic mechanism. At Tyr416 the chain carries Phosphotyrosine; by autocatalysis.

Belongs to the protein kinase superfamily. Tyr protein kinase family. SRC subfamily. Homodimer. The phosphorylated form is termed pp60v-src.

It carries out the reaction L-tyrosyl-[protein] + ATP = O-phospho-L-tyrosyl-[protein] + ADP + H(+). Its function is as follows. This phosphoprotein, required for both the initiation and the maintenance of neoplastic transformation, is a protein kinase that catalyzes the phosphorylation of tyrosine residues in vitro. Causes mitotic slippage in addition to cytokinesis failure in the host cell. Phosphorylates and attenuates the activity of host CDK1, possibly causing the mitotic slippage. The chain is Tyrosine-protein kinase transforming protein Src (V-SRC) from Rous sarcoma virus subgroup A (strain Schmidt-Ruppin) (RSV-SR-A).